Here is a 247-residue protein sequence, read N- to C-terminus: uncharacterized protein (247 aa).

The protein to M.pneumoniae MPN_635 N-terminal region.

This is an uncharacterized protein from Mycoplasma pneumoniae (strain ATCC 29342 / M129 / Subtype 1) (Mycoplasmoides pneumoniae).